The chain runs to 128 residues: Transcription antitermination protein NusB (128 aa).

It belongs to the NusB family.

Functionally, involved in transcription antitermination. Required for transcription of ribosomal RNA (rRNA) genes. Binds specifically to the boxA antiterminator sequence of the ribosomal RNA (rrn) operons. In Listeria innocua serovar 6a (strain ATCC BAA-680 / CLIP 11262), this protein is Transcription antitermination protein NusB.